A 544-amino-acid chain; its full sequence is Glutamyl-tRNA(Gln) amidotransferase subunit B, chloroplastic/mitochondrial (544 aa).

The protein belongs to the GatB/GatE family. GatB subfamily. In terms of assembly, subunit of the heterotrimeric GatCAB amidotransferase (AdT) complex, composed of A, B and C subunits.

The protein resides in the mitochondrion. It localises to the plastid. The protein localises to the chloroplast. It catalyses the reaction L-glutamyl-tRNA(Gln) + L-glutamine + ATP + H2O = L-glutaminyl-tRNA(Gln) + L-glutamate + ADP + phosphate + H(+). In terms of biological role, allows the formation of correctly charged Gln-tRNA(Gln) through the transamidation of misacylated Glu-tRNA(Gln) in chloroplasts and mitochondria. The reaction takes place in the presence of glutamine and ATP through an activated gamma-phospho-Glu-tRNA(Gln). The protein is Glutamyl-tRNA(Gln) amidotransferase subunit B, chloroplastic/mitochondrial of Oryza sativa subsp. japonica (Rice).